Consider the following 72-residue polypeptide: Translation initiation factor IF-1 (72 aa).

Positions 1–72 (MAKEEVLEFP…TKGRITYRFK (72 aa)) constitute an S1-like domain.

The protein belongs to the IF-1 family. In terms of assembly, component of the 30S ribosomal translation pre-initiation complex which assembles on the 30S ribosome in the order IF-2 and IF-3, IF-1 and N-formylmethionyl-tRNA(fMet); mRNA recruitment can occur at any time during PIC assembly.

The protein resides in the cytoplasm. One of the essential components for the initiation of protein synthesis. Stabilizes the binding of IF-2 and IF-3 on the 30S subunit to which N-formylmethionyl-tRNA(fMet) subsequently binds. Helps modulate mRNA selection, yielding the 30S pre-initiation complex (PIC). Upon addition of the 50S ribosomal subunit IF-1, IF-2 and IF-3 are released leaving the mature 70S translation initiation complex. This Brucella abortus (strain 2308) protein is Translation initiation factor IF-1.